The chain runs to 225 residues: Ribosomal RNA small subunit methyltransferase G (225 aa).

S-adenosyl-L-methionine is bound by residues glycine 84, phenylalanine 89, 107-109, 135-136, and arginine 154; these read DST and AE.

It belongs to the methyltransferase superfamily. RNA methyltransferase RsmG family.

Its subcellular location is the cytoplasm. Its function is as follows. Specifically methylates the N7 position of a guanine in 16S rRNA. In Microcystis aeruginosa (strain NIES-843 / IAM M-2473), this protein is Ribosomal RNA small subunit methyltransferase G.